The sequence spans 233 residues: ATP-dependent dethiobiotin synthetase BioD (233 aa).

ATP is bound at residue 12-17 (EVGKTY). Thr-16 is a binding site for Mg(2+). Lys-37 is an active-site residue. ATP-binding positions include Asp-54, 120–123 (EGAG), and 186–187 (ND). Residues Asp-54 and Glu-120 each coordinate Mg(2+).

It belongs to the dethiobiotin synthetase family. Homodimer. The cofactor is Mg(2+).

It localises to the cytoplasm. The catalysed reaction is (7R,8S)-7,8-diammoniononanoate + CO2 + ATP = (4R,5S)-dethiobiotin + ADP + phosphate + 3 H(+). It functions in the pathway cofactor biosynthesis; biotin biosynthesis; biotin from 7,8-diaminononanoate: step 1/2. Functionally, catalyzes a mechanistically unusual reaction, the ATP-dependent insertion of CO2 between the N7 and N8 nitrogen atoms of 7,8-diaminopelargonic acid (DAPA, also called 7,8-diammoniononanoate) to form a ureido ring. The chain is ATP-dependent dethiobiotin synthetase BioD from Alteromonas mediterranea (strain DSM 17117 / CIP 110805 / LMG 28347 / Deep ecotype).